We begin with the raw amino-acid sequence, 622 residues long: Probable potassium transport system protein Kup 1 (622 aa).

The next 12 helical transmembrane spans lie at 11–31 (LTLGAIGVVYGDIGTSVLYAV), 50–70 (ILSIFFWTLTIIVSLKYVTLV), 101–121 (VLLLVGIFGTCLFYGDGVITP), 137–157 (PAFNKFVIPLTLLVLFGLFWV), 168–188 (FFGPITVVWFACIAVLGVAQI), 215–235 (FIILGAVVLCVTGAEALYADL), 247–267 (WFAVVMPALTLNYFGQGALLL), 285–305 (ALLPLVGLATLATVIASQALI), 337–357 (IYLPFVNWGLFVTIVLAVMIF), 366–386 (AYGIAVCTDMLITTILTFFVI), 393–413 (PLWLCVAATSFFFVVDFAFWA), and 419–439 (LFDGGWFPLLIGGAIFILMIT).

The protein belongs to the HAK/KUP transporter (TC 2.A.72) family.

The protein resides in the cell inner membrane. The enzyme catalyses K(+)(in) + H(+)(in) = K(+)(out) + H(+)(out). Its function is as follows. Transport of potassium into the cell. Likely operates as a K(+):H(+) symporter. The sequence is that of Probable potassium transport system protein Kup 1 from Albidiferax ferrireducens (strain ATCC BAA-621 / DSM 15236 / T118) (Rhodoferax ferrireducens).